The chain runs to 123 residues: Small ribosomal subunit protein uS12 (123 aa).

Position 89 is a 3-methylthioaspartic acid (D89).

The protein belongs to the universal ribosomal protein uS12 family. As to quaternary structure, part of the 30S ribosomal subunit. Contacts proteins S8 and S17. May interact with IF1 in the 30S initiation complex.

In terms of biological role, with S4 and S5 plays an important role in translational accuracy. Functionally, interacts with and stabilizes bases of the 16S rRNA that are involved in tRNA selection in the A site and with the mRNA backbone. Located at the interface of the 30S and 50S subunits, it traverses the body of the 30S subunit contacting proteins on the other side and probably holding the rRNA structure together. The combined cluster of proteins S8, S12 and S17 appears to hold together the shoulder and platform of the 30S subunit. The chain is Small ribosomal subunit protein uS12 from Rhodopseudomonas palustris (strain HaA2).